A 507-amino-acid polypeptide reads, in one-letter code: MIPETLNPLNYFTSLVPDLMPVATVPIIILICFLFLIWNHEETSSIPGPGYCMGIGPLISHGRFLWMGVGNACNYYNKTYGEFVRVWISGEETFIISKSSSVFHVMKHWNYVSRFGSKLGLQCIGMYENGIIFNNNPAHWKEIRPFFTKALSGPGLVRMIAICVESTIVHLDKLEEVTTEVGNVNVLNLMRRIMLDTSNKLFLGVPLDESAIVLKIQNYFDAWQALLLKPDIFFKISWLCKKYEEAAKDLKGAMEILIEQKRQKLSTVEKLDEHMDFASQLIFAQNRGDLTAENVNQCVLEMMIAAPDTLSVTLFIMLILIADDPTVEEKMMREIETVMGDREVQSDDMPNLKIVENFIYESMRYQPVVDLIMRKALQDDVIDGYPVKKGTNIILNIGRMHKLEFFPKPNEFSLENFEKNVPSRYFQPFGFGPRGCVGKFIAMVMMKAILVTLLRRCRVQTMKGRGLNNIQKNNDLSMHPIERQPLLEMVFTQEAQTRIRVTKVDQH.

Cys436 provides a ligand contact to heme.

This sequence belongs to the cytochrome P450 family. Heme is required as a cofactor.

Its subcellular location is the membrane. The enzyme catalyses testosterone + 3 reduced [NADPH--hemoprotein reductase] + 3 O2 = 17beta-estradiol + formate + 3 oxidized [NADPH--hemoprotein reductase] + 4 H2O + 4 H(+). It catalyses the reaction androst-4-ene-3,17-dione + 3 reduced [NADPH--hemoprotein reductase] + 3 O2 = estrone + formate + 3 oxidized [NADPH--hemoprotein reductase] + 4 H2O + 4 H(+). Catalyzes the formation of aromatic C18 estrogens from C19 androgens. This is Aromatase (CYP19A1) from Gallus gallus (Chicken).